Reading from the N-terminus, the 274-residue chain is Eukaryotic translation initiation factor 3 subunit G-2 (274 aa).

The region spanning 194-272 is the RRM domain; the sequence is SAVRISNLSE…LILCVEWSKP (79 aa).

This sequence belongs to the eIF-3 subunit G family. In terms of assembly, component of the eukaryotic translation initiation factor 3 (eIF-3) complex. The eIF-3 complex interacts with pix.

The protein resides in the cytoplasm. Its function is as follows. RNA-binding component of the eukaryotic translation initiation factor 3 (eIF-3) complex, which is involved in protein synthesis of a specialized repertoire of mRNAs and, together with other initiation factors, stimulates binding of mRNA and methionyl-tRNAi to the 40S ribosome. The eIF-3 complex specifically targets and initiates translation of a subset of mRNAs involved in cell proliferation. This subunit can bind 18S rRNA. This chain is Eukaryotic translation initiation factor 3 subunit G-2, found in Drosophila pseudoobscura pseudoobscura (Fruit fly).